Here is a 480-residue protein sequence, read N- to C-terminus: Aspartyl/glutamyl-tRNA(Asn/Gln) amidotransferase subunit B (480 aa).

It belongs to the GatB/GatE family. GatB subfamily. Heterotrimer of A, B and C subunits.

It carries out the reaction L-glutamyl-tRNA(Gln) + L-glutamine + ATP + H2O = L-glutaminyl-tRNA(Gln) + L-glutamate + ADP + phosphate + H(+). The enzyme catalyses L-aspartyl-tRNA(Asn) + L-glutamine + ATP + H2O = L-asparaginyl-tRNA(Asn) + L-glutamate + ADP + phosphate + 2 H(+). Allows the formation of correctly charged Asn-tRNA(Asn) or Gln-tRNA(Gln) through the transamidation of misacylated Asp-tRNA(Asn) or Glu-tRNA(Gln) in organisms which lack either or both of asparaginyl-tRNA or glutaminyl-tRNA synthetases. The reaction takes place in the presence of glutamine and ATP through an activated phospho-Asp-tRNA(Asn) or phospho-Glu-tRNA(Gln). The polypeptide is Aspartyl/glutamyl-tRNA(Asn/Gln) amidotransferase subunit B (Streptococcus pneumoniae (strain Hungary19A-6)).